The sequence spans 304 residues: tRNA dimethylallyltransferase (304 aa).

10 to 17 (GPTASGKT) lines the ATP pocket. Residue 12-17 (TASGKT) participates in substrate binding. 3 interaction with substrate tRNA regions span residues 35 to 38 (DSAL), 159 to 163 (QRLSR), and 240 to 245 (RCVGYR).

It belongs to the IPP transferase family. Monomer. Requires Mg(2+) as cofactor.

It catalyses the reaction adenosine(37) in tRNA + dimethylallyl diphosphate = N(6)-dimethylallyladenosine(37) in tRNA + diphosphate. Functionally, catalyzes the transfer of a dimethylallyl group onto the adenine at position 37 in tRNAs that read codons beginning with uridine, leading to the formation of N6-(dimethylallyl)adenosine (i(6)A). The chain is tRNA dimethylallyltransferase from Shewanella putrefaciens (strain CN-32 / ATCC BAA-453).